Consider the following 219-residue polypeptide: Probable GTP-binding protein EngB (219 aa).

In terms of domain architecture, EngB-type G spans valine 24 to proline 207. GTP contacts are provided by residues glycine 32–serine 39, glycine 59–histidine 63, aspartate 81–glycine 84, threonine 148–aspartate 151, and leucine 185–alanine 188. Residues serine 39 and threonine 61 each contribute to the Mg(2+) site.

The protein belongs to the TRAFAC class TrmE-Era-EngA-EngB-Septin-like GTPase superfamily. EngB GTPase family. Mg(2+) is required as a cofactor.

In terms of biological role, necessary for normal cell division and for the maintenance of normal septation. The polypeptide is Probable GTP-binding protein EngB (Burkholderia thailandensis (strain ATCC 700388 / DSM 13276 / CCUG 48851 / CIP 106301 / E264)).